A 1881-amino-acid chain; its full sequence is Endoribonuclease Dicer-S (1881 aa).

In terms of domain architecture, Helicase ATP-binding spans 41 to 217 (LLEAALDHNI…DLEEKIQNLE (177 aa)). 54–61 (LNSGSGKT) is a binding site for ATP. The short motif at 165–168 (DECH) is the DECH box element. The region spanning 425 to 594 (SFPSPFTNIL…SMDCGNTESE (170 aa)) is the Helicase C-terminal domain. The 93-residue stretch at 622–714 (AIGHINRYCA…MPVGKETVKY (93 aa)) folds into the Dicer dsRNA-binding fold domain. The PAZ domain maps to 887–1034 (KFVEDIEKSE…LVPELCAIHP (148 aa)). 2 RNase III domains span residues 1249–1380 (TSDI…ETSG) and 1625–1783 (FENF…MDSG). 6 residues coordinate Mg(2+): E1293, D1371, E1374, E1664, D1769, and E1772. One can recognise a DRBM domain in the interval 1808-1873 (VPRSPVRELL…ARRALRSLKA (66 aa)).

It belongs to the helicase family. Dicer subfamily. Component of the RISC loading complex (RLC), or micro-RNA (miRNA) loading complex (miRLC), which is composed of dicer1, ago2 and tarbp2; dicer1 and tarbp2 are required to process precursor miRNAs (pre-miRNAs) to mature miRNAs and then load them onto ago2. Note that the trimeric RLC/miRLC is also referred to as RISC. The cofactor is Mg(2+). Mn(2+) is required as a cofactor.

The protein resides in the cytoplasm. The catalysed reaction is Endonucleolytic cleavage to 5'-phosphomonoester.. Functionally, double-stranded RNA (dsRNA) endoribonuclease playing a central role in short dsRNA-mediated post-transcriptional gene silencing. Cleaves naturally occurring long dsRNAs and short hairpin pre-microRNAs (miRNA) into fragments of twenty-one to twenty-three nucleotides with 3' overhang of two nucleotides, producing respectively short interfering RNAs (siRNA) and mature microRNAs. SiRNAs and miRNAs serve as guide to direct the RNA-induced silencing complex (RISC) to complementary RNAs to degrade them or prevent their translation. Gene silencing mediated by siRNAs, also called RNA interference, controls the elimination of transcripts from mobile and repetitive DNA elements of the genome but also the degradation of exogenous RNA of viral origin for instance. The miRNA pathway on the other side is a mean to specifically regulate the expression of target genes. During embryonic development, at the left-right organizer, post-transcriptionally regulates the expression of dand5 in flow sensor cells. In post-flow stages, acts along with Bicc1 to repress dand5 mRNA translation and decay. Decreased Dand5 expression lifts repression of Nodal and defines leftness by induction of the lateral plate mesoderm Nodal signaling cascade. In Xenopus laevis (African clawed frog), this protein is Endoribonuclease Dicer-S (dicer1.S).